A 145-amino-acid polypeptide reads, in one-letter code: uncharacterized protein (145 aa).

The protein belongs to the SAP18 family.

It is found in the cytoplasm. It localises to the nucleus. This is an uncharacterized protein from Schizosaccharomyces pombe (strain 972 / ATCC 24843) (Fission yeast).